The primary structure comprises 128 residues: Azurin (128 aa).

The Plastocyanin-like domain occupies 1–128; sequence AECKVDVDST…SMMKGAVVLK (128 aa). Residues Cys-3 and Cys-26 are joined by a disulfide bond. Residues His-46, Cys-112, His-117, and Met-121 each contribute to the Cu cation site.

It localises to the periplasm. In terms of biological role, transfers electrons from cytochrome c551 to cytochrome oxidase. In Pseudomonas chlororaphis (Pseudomonas aureofaciens), this protein is Azurin.